Here is a 435-residue protein sequence, read N- to C-terminus: Probable E3 ubiquitin-protein ligase makorin-1 (435 aa).

2 C3H1-type zinc fingers span residues W18 to T45 and K48 to P75. Residues L81 to P109 are disordered. Positions D99–V108 are enriched in pro residues. A C3H1-type 3 zinc finger spans residues Q155 to V182. A makorin-type Cys-His region spans residues C183 to H210. The RING-type zinc-finger motif lies at C228–R282. The C3H1-type 4 zinc-finger motif lies at G311–P340. The interval E345–W369 is disordered.

Weakly expressed in adult brain, heart and kidney.

It catalyses the reaction S-ubiquitinyl-[E2 ubiquitin-conjugating enzyme]-L-cysteine + [acceptor protein]-L-lysine = [E2 ubiquitin-conjugating enzyme]-L-cysteine + N(6)-ubiquitinyl-[acceptor protein]-L-lysine.. Its pathway is protein modification; protein ubiquitination. Functionally, E3 ubiquitin ligase catalyzing the covalent attachment of ubiquitin moieties onto substrate proteins. This is Probable E3 ubiquitin-protein ligase makorin-1 from Seriola quinqueradiata (Five-ray yellowtail).